A 180-amino-acid chain; its full sequence is Pro-glucagon (180 aa).

Residues 1-20 (MKSIYFVAGLFVMLVQGSWQ) form the signal peptide. The interval 26-56 (TEEKSRSFSAPQTEPLNDLDQMNEDKRHSQG) is disordered. S54 bears the Phosphoserine mark. The propeptide occupies 84 to 89 (NKNNIA). S105 and S108 each carry phosphoserine. Residue R127 is modified to Arginine amide. Positions 131-145 (DFPEEVAIVEEFRRR) are excised as a propeptide. A phosphoserine mark is found at S150 and S152.

This sequence belongs to the glucagon family. In terms of processing, proglucagon is post-translationally processed in a tissue-specific manner in pancreatic A cells and intestinal L cells. In pancreatic A cells, the major bioactive hormone is glucagon cleaved by PCSK2/PC2. In the intestinal L cells PCSK1/PC1 liberates GLP-1, GLP-2, glicentin and oxyntomodulin. GLP-1 is further N-terminally truncated by post-translational processing in the intestinal L cells resulting in GLP-1(7-37) GLP-1-(7-36)amide. The C-terminal amidation is neither important for the metabolism of GLP-1 nor for its effects on the endocrine pancreas. In terms of tissue distribution, glucagon is secreted in the A cells of the islets of Langerhans. GLP-1, GLP-2, oxyntomodulin and glicentin are secreted from enteroendocrine cells throughout the gastrointestinal tract. GLP-1 and GLP-2 are also secreted in selected neurons in the brain.

The protein localises to the secreted. Functionally, plays a key role in glucose metabolism and homeostasis. Regulates blood glucose by increasing gluconeogenesis and decreasing glycolysis. A counterregulatory hormone of insulin, raises plasma glucose levels in response to insulin-induced hypoglycemia. Plays an important role in initiating and maintaining hyperglycemic conditions in diabetes. Its function is as follows. Potent stimulator of glucose-dependent insulin release. Also stimulates insulin release in response to IL6. Plays important roles on gastric motility and the suppression of plasma glucagon levels. May be involved in the suppression of satiety and stimulation of glucose disposal in peripheral tissues, independent of the actions of insulin. Has growth-promoting activities on intestinal epithelium. May also regulate the hypothalamic pituitary axis (HPA) via effects on LH, TSH, CRH, oxytocin, and vasopressin secretion. Increases islet mass through stimulation of islet neogenesis and pancreatic beta cell proliferation. Inhibits beta cell apoptosis. Stimulates intestinal growth and up-regulates villus height in the small intestine, concomitant with increased crypt cell proliferation and decreased enterocyte apoptosis. The gastrointestinal tract, from the stomach to the colon is the principal target for GLP-2 action. Plays a key role in nutrient homeostasis, enhancing nutrient assimilation through enhanced gastrointestinal function, as well as increasing nutrient disposal. Stimulates intestinal glucose transport and decreases mucosal permeability. In terms of biological role, significantly reduces food intake. Inhibits gastric emptying in humans. Suppression of gastric emptying may lead to increased gastric distension, which may contribute to satiety by causing a sensation of fullness. Functionally, may modulate gastric acid secretion and the gastro-pyloro-duodenal activity. May play an important role in intestinal mucosal growth in the early period of life. This is Pro-glucagon (GCG) from Canis lupus familiaris (Dog).